A 361-amino-acid chain; its full sequence is Aminomethyltransferase (361 aa).

It belongs to the GcvT family. In terms of assembly, the glycine cleavage system is composed of four proteins: P, T, L and H.

The catalysed reaction is N(6)-[(R)-S(8)-aminomethyldihydrolipoyl]-L-lysyl-[protein] + (6S)-5,6,7,8-tetrahydrofolate = N(6)-[(R)-dihydrolipoyl]-L-lysyl-[protein] + (6R)-5,10-methylene-5,6,7,8-tetrahydrofolate + NH4(+). The glycine cleavage system catalyzes the degradation of glycine. In Bacteroides thetaiotaomicron (strain ATCC 29148 / DSM 2079 / JCM 5827 / CCUG 10774 / NCTC 10582 / VPI-5482 / E50), this protein is Aminomethyltransferase.